The sequence spans 422 residues: Tryptophan synthase beta chain (422 aa).

Residue K111 is modified to N6-(pyridoxal phosphate)lysine.

This sequence belongs to the TrpB family. In terms of assembly, tetramer of two alpha and two beta chains. The cofactor is pyridoxal 5'-phosphate.

It catalyses the reaction (1S,2R)-1-C-(indol-3-yl)glycerol 3-phosphate + L-serine = D-glyceraldehyde 3-phosphate + L-tryptophan + H2O. Its pathway is amino-acid biosynthesis; L-tryptophan biosynthesis; L-tryptophan from chorismate: step 5/5. Functionally, the beta subunit is responsible for the synthesis of L-tryptophan from indole and L-serine. This Pseudothermotoga lettingae (strain ATCC BAA-301 / DSM 14385 / NBRC 107922 / TMO) (Thermotoga lettingae) protein is Tryptophan synthase beta chain.